The chain runs to 278 residues: Small ribosomal subunit protein uS9m (278 aa).

A mitochondrion-targeting transit peptide spans 1–10 (MFSRLSLFRR). The interval 259 to 278 (VERKKPGKKKARKMPTWVKR) is disordered.

Belongs to the universal ribosomal protein uS9 family. As to quaternary structure, component of the mitochondrial small ribosomal subunit (mt-SSU). Mature yeast 74S mitochondrial ribosomes consist of a small (37S) and a large (54S) subunit. The 37S small subunit contains a 15S ribosomal RNA (15S mt-rRNA) and 34 different proteins. The 54S large subunit contains a 21S rRNA (21S mt-rRNA) and 46 different proteins.

Its subcellular location is the mitochondrion. Functionally, component of the mitochondrial ribosome (mitoribosome), a dedicated translation machinery responsible for the synthesis of mitochondrial genome-encoded proteins, including at least some of the essential transmembrane subunits of the mitochondrial respiratory chain. The mitoribosomes are attached to the mitochondrial inner membrane and translation products are cotranslationally integrated into the membrane. This chain is Small ribosomal subunit protein uS9m (MRPS9), found in Saccharomyces cerevisiae (strain ATCC 204508 / S288c) (Baker's yeast).